Consider the following 238-residue polypeptide: 1-(5-phosphoribosyl)-5-[(5-phosphoribosylamino)methylideneamino] imidazole-4-carboxamide isomerase (238 aa).

The Proton acceptor role is filled by Asp8. The Proton donor role is filled by Asp130.

The protein belongs to the HisA/HisF family.

It localises to the cytoplasm. The enzyme catalyses 1-(5-phospho-beta-D-ribosyl)-5-[(5-phospho-beta-D-ribosylamino)methylideneamino]imidazole-4-carboxamide = 5-[(5-phospho-1-deoxy-D-ribulos-1-ylimino)methylamino]-1-(5-phospho-beta-D-ribosyl)imidazole-4-carboxamide. Its pathway is amino-acid biosynthesis; L-histidine biosynthesis; L-histidine from 5-phospho-alpha-D-ribose 1-diphosphate: step 4/9. This Methanococcus maripaludis (strain C7 / ATCC BAA-1331) protein is 1-(5-phosphoribosyl)-5-[(5-phosphoribosylamino)methylideneamino] imidazole-4-carboxamide isomerase.